The following is an 897-amino-acid chain: Isoleucine--tRNA ligase (897 aa).

The short motif at 59-69 (PYANGDIHVGH) is the 'HIGH' region element. Glu-552 serves as a coordination point for L-isoleucyl-5'-AMP. The 'KMSKS' region motif lies at 593–597 (KMSKS). Residue Lys-596 participates in ATP binding. The Zn(2+) site is built by Cys-872, Cys-875, Cys-890, and Cys-893.

Belongs to the class-I aminoacyl-tRNA synthetase family. IleS type 1 subfamily. In terms of assembly, monomer. Requires Zn(2+) as cofactor.

It localises to the cytoplasm. The enzyme catalyses tRNA(Ile) + L-isoleucine + ATP = L-isoleucyl-tRNA(Ile) + AMP + diphosphate. Functionally, catalyzes the attachment of isoleucine to tRNA(Ile). As IleRS can inadvertently accommodate and process structurally similar amino acids such as valine, to avoid such errors it has two additional distinct tRNA(Ile)-dependent editing activities. One activity is designated as 'pretransfer' editing and involves the hydrolysis of activated Val-AMP. The other activity is designated 'posttransfer' editing and involves deacylation of mischarged Val-tRNA(Ile). In Mycoplasmoides gallisepticum (strain R(low / passage 15 / clone 2)) (Mycoplasma gallisepticum), this protein is Isoleucine--tRNA ligase.